The chain runs to 306 residues: Ribosomal RNA small subunit methyltransferase H (306 aa).

Residues 33–35 (GGY), Asp-51, Phe-78, Asp-96, and Gln-103 each bind S-adenosyl-L-methionine.

Belongs to the methyltransferase superfamily. RsmH family.

The protein resides in the cytoplasm. It carries out the reaction cytidine(1402) in 16S rRNA + S-adenosyl-L-methionine = N(4)-methylcytidine(1402) in 16S rRNA + S-adenosyl-L-homocysteine + H(+). Specifically methylates the N4 position of cytidine in position 1402 (C1402) of 16S rRNA. The protein is Ribosomal RNA small subunit methyltransferase H of Rickettsia felis (strain ATCC VR-1525 / URRWXCal2) (Rickettsia azadi).